The primary structure comprises 105 residues: Ferredoxin (105 aa).

Residues Cys8 and Cys16 each contribute to the [3Fe-4S] cluster site. [4Fe-4S] cluster is bound by residues Cys20, Cys39, Cys42, and Cys45. Residues Arg30–Asp59 enclose the 4Fe-4S ferredoxin-type domain. A [3Fe-4S] cluster-binding site is contributed by Cys49.

It depends on [4Fe-4S] cluster as a cofactor. Requires [3Fe-4S] cluster as cofactor.

Ferredoxins are iron-sulfur proteins that transfer electrons in a wide variety of metabolic reactions. In terms of biological role, putative electron transport protein for the cytochrome P-450SOY system from the same organism. The polypeptide is Ferredoxin (Streptomyces griseus).